A 329-amino-acid chain; its full sequence is Helicase VP6-A (329 aa).

2 disordered regions span residues 27–130 and 189–232; these read INLV…TNGG and DLRR…SEEP. Basic and acidic residues-rich tracts occupy residues 36–58, 65–83, and 96–109; these read EGGK…KDGE, GQKE…DRRI, and SGER…RGDG. Residue lysine 110 participates in ATP binding. A compositionally biased stretch (gly residues) spans 110–129; that stretch reads KVGGGGGDADAGVGATGTNG. Composition is skewed to basic and acidic residues over residues 189 to 207 and 215 to 232; these read DLRR…ERGG and HGDA…SEEP.

The protein belongs to the reoviruses VP6 family. In terms of assembly, homohexamer.

It is found in the virion. The enzyme catalyses ATP + H2O = ADP + phosphate + H(+). ATP dependent RNA helicase essential for RNA packaging and viral transcription. Possesses ss- and dsRNA-binding capacity. This chain is Helicase VP6-A (Segment-9), found in Antilocapra americana (Pronghorn).